We begin with the raw amino-acid sequence, 160 residues long: tRNA (cytidine(56)-2'-O)-methyltransferase (160 aa).

Residues L68, 94 to 98 (GAEKV), and 112 to 119 (IGNQPHSE) contribute to the S-adenosyl-L-methionine site.

The protein belongs to the aTrm56 family. Homodimer.

The protein localises to the cytoplasm. The enzyme catalyses cytidine(56) in tRNA + S-adenosyl-L-methionine = 2'-O-methylcytidine(56) in tRNA + S-adenosyl-L-homocysteine + H(+). In terms of biological role, specifically catalyzes the AdoMet-dependent 2'-O-ribose methylation of cytidine at position 56 in tRNAs. This chain is tRNA (cytidine(56)-2'-O)-methyltransferase, found in Saccharolobus solfataricus (strain ATCC 35092 / DSM 1617 / JCM 11322 / P2) (Sulfolobus solfataricus).